Here is a 434-residue protein sequence, read N- to C-terminus: MAAGLALARPNLLNPNNPIRSLSLAFWLWKAFVFLIIIGCPGPGYDTSTGLLPYQESAASGAKLEAIRHAPFSFPLKLVRWDSIYFVHIVRDDYVFEQEWAFGYGYTRILSFLTSVALSHIAHYFSVLALYRLSINIFGHDNTSGALISFLSATLHIICPAGAFLSAPYGESLFSFLNITGYFLYSSSLLDANAGKRASSDAKLLLAAALFSIATAVRSNGILSGALFAFDALLQLRKIFTQGISGDILLRLGVIVVGGCVIALGLIVPQWIAYTTFCMSDEPLRPWCEQLIPSIYGWVQVHYWNVGFLRYWTLSNLPLFILAFPMLFLMCRSSIWALNTAWPLDTATAVLTRLAAPNGLLAVMAFTSYHVQIINRISSGYPLWYWYIICQLSSHVADSSSVVKRSQTFSIAIQGMVIYAIVQAVLFGSFLPPA.

10 helical membrane passes run 22–42 (LSLAFWLWKAFVFLIIIGCPG), 109–129 (ILSFLTSVALSHIAHYFSVLA), 145–165 (GALISFLSATLHIICPAGAFL), 170–190 (GESLFSFLNITGYFLYSSSLL), 210–230 (LFSIATAVRSNGILSGALFAF), 252–272 (LGVIVVGGCVIALGLIVPQWI), 311–331 (YWTLSNLPLFILAFPMLFLMC), 354–374 (LAAPNGLLAVMAFTSYHVQII), 377–397 (ISSGYPLWYWYIICQLSSHVA), and 411–431 (IAIQGMVIYAIVQAVLFGSFL).

The protein belongs to the PIGV family.

Its subcellular location is the endoplasmic reticulum membrane. It functions in the pathway glycolipid biosynthesis; glycosylphosphatidylinositol-anchor biosynthesis. Its function is as follows. Mannosyltransferase involved in glycosylphosphatidylinositol-anchor biosynthesis. Transfers the second mannose to the glycosylphosphatidylinositol during GPI precursor assembly. In Aspergillus oryzae (strain ATCC 42149 / RIB 40) (Yellow koji mold), this protein is GPI mannosyltransferase 2 (gpi18).